A 1361-amino-acid polypeptide reads, in one-letter code: Zinc finger protein GLI4 (1361 aa).

Residues 185-270 (SSFGHTPLLH…PQPPDHLTDL (86 aa)) form a disordered region. 2 stretches are compositionally biased toward polar residues: residues 198–208 (TFASRQQGALT) and 227–241 (NKVSSESAVSSTVNQ). 5 consecutive C2H2-type zinc fingers follow at residues 289-314 (TNCHWDGCSKEFDTQDQLVHHINNDH), 322-349 (FVCRWQDCSREQKPFKAQYMLVVHMRRH), 355-379 (HKCTFEGCFKAYSRLENLKTHLRSH), 385-410 (YVCDHEGCNKAFSNASDRAKHQNRTH), and 416-441 (YICKVPGCTKRYTDPSSLRKHVKTVH). 6 disordered regions span residues 434–527 (RKHV…TNNI), 556–584 (STVSSWQRSGRPATPETQRIHSAETGTAE), 647–720 (NERR…LPNL), 787–832 (NAGL…SMNS), 906–946 (QNRE…APGA), and 1134–1230 (DGLH…PKDN). The segment covering 475-502 (SGREHSDSVSRDQEHCLQTRTIKTEDNM) has biased composition (basic and acidic residues). Over residues 506-522 (SSPGGQSSCSSEPSPYG) the composition is skewed to low complexity. The span at 573-584 (QRIHSAETGTAE) shows a compositional bias: basic and acidic residues. Positions 653-670 (TSSTLSSAYTSRRSSGIS) are enriched in low complexity. Composition is skewed to polar residues over residues 672 to 695 (YFSSRRSSETSQFGGRLNNSSSAD) and 710 to 720 (EASQHSGLPNL). Positions 805–821 (RASDPVRRTAGIDDKPL) are enriched in basic and acidic residues. 2 stretches are compositionally biased toward polar residues: residues 913–939 (QNLQTEYSSPARNLQSNTKSFHNNTPE) and 1142–1164 (YTVQPQKNGLEPQQNTLGMSGQA). The span at 1172-1183 (PRPPAAPHPPNR) shows a compositional bias: pro residues.

The protein belongs to the GLI C2H2-type zinc-finger protein family.

It localises to the nucleus. Functionally, has an essential role in the early embryonic patterning of mesoderm and neuroectoderm. The sequence is that of Zinc finger protein GLI4 (gli4) from Xenopus laevis (African clawed frog).